The following is a 232-amino-acid chain: tRNA (guanine-N(7)-)-methyltransferase (232 aa).

S-adenosyl-L-methionine is bound by residues E63, E88, D115, and D137. The active site involves D137. Residues K141, D173, and T211–E214 each bind substrate.

It belongs to the class I-like SAM-binding methyltransferase superfamily. TrmB family.

It carries out the reaction guanosine(46) in tRNA + S-adenosyl-L-methionine = N(7)-methylguanosine(46) in tRNA + S-adenosyl-L-homocysteine. Its pathway is tRNA modification; N(7)-methylguanine-tRNA biosynthesis. Its function is as follows. Catalyzes the formation of N(7)-methylguanine at position 46 (m7G46) in tRNA. The sequence is that of tRNA (guanine-N(7)-)-methyltransferase from Agrobacterium fabrum (strain C58 / ATCC 33970) (Agrobacterium tumefaciens (strain C58)).